The chain runs to 471 residues: Ribulose bisphosphate carboxylase large chain (471 aa).

Residues Asn119 and Thr169 each coordinate substrate. The Proton acceptor role is filled by Lys171. Substrate is bound at residue Lys173. 3 residues coordinate Mg(2+): Lys197, Asp199, and Glu200. The residue at position 197 (Lys197) is an N6-carboxylysine. Residue His290 is the Proton acceptor of the active site. Substrate is bound by residues Arg291, His323, and Ser375.

This sequence belongs to the RuBisCO large chain family. Type I subfamily. Heterohexadecamer of 8 large chains and 8 small chains; disulfide-linked. The disulfide link is formed within the large subunit homodimers. It depends on Mg(2+) as a cofactor. The disulfide bond which can form in the large chain dimeric partners within the hexadecamer appears to be associated with oxidative stress and protein turnover.

The protein localises to the carboxysome. It carries out the reaction 2 (2R)-3-phosphoglycerate + 2 H(+) = D-ribulose 1,5-bisphosphate + CO2 + H2O. The enzyme catalyses D-ribulose 1,5-bisphosphate + O2 = 2-phosphoglycolate + (2R)-3-phosphoglycerate + 2 H(+). In terms of biological role, ruBisCO catalyzes two reactions: the carboxylation of D-ribulose 1,5-bisphosphate, the primary event in carbon dioxide fixation, as well as the oxidative fragmentation of the pentose substrate in the photorespiration process. Both reactions occur simultaneously and in competition at the same active site. The protein is Ribulose bisphosphate carboxylase large chain of Microcystis aeruginosa (strain NIES-843 / IAM M-2473).